The sequence spans 159 residues: Phosphopantetheine adenylyltransferase (159 aa).

Substrate is bound at residue Thr10. ATP contacts are provided by residues 10–11 (TF) and His18. The substrate site is built by Lys42, Leu74, and Arg88. ATP contacts are provided by residues 89-91 (GLR), Glu99, and 124-130 (NAFISSS).

It belongs to the bacterial CoaD family. In terms of assembly, homohexamer. Requires Mg(2+) as cofactor.

The protein localises to the cytoplasm. It carries out the reaction (R)-4'-phosphopantetheine + ATP + H(+) = 3'-dephospho-CoA + diphosphate. It functions in the pathway cofactor biosynthesis; coenzyme A biosynthesis; CoA from (R)-pantothenate: step 4/5. Reversibly transfers an adenylyl group from ATP to 4'-phosphopantetheine, yielding dephospho-CoA (dPCoA) and pyrophosphate. This is Phosphopantetheine adenylyltransferase from Campylobacter fetus subsp. fetus (strain 82-40).